The primary structure comprises 102 residues: Putative defensin-like protein 152 (102 aa).

Residues 1–29 form the signal peptide; it reads MKKASQLSTTILTIFIVLAIGMMVKGTVG. 4 disulfides stabilise this stretch: Cys-34–Cys-93, Cys-51–Cys-71, Cys-56–Cys-87, and Cys-60–Cys-89.

The protein belongs to the DEFL family.

It localises to the secreted. The polypeptide is Putative defensin-like protein 152 (LCR11) (Arabidopsis thaliana (Mouse-ear cress)).